A 169-amino-acid chain; its full sequence is Crossover junction endodeoxyribonuclease RuvC (169 aa).

Residues Asp7, Glu67, and Asp140 contribute to the active site. Mg(2+) is bound by residues Asp7, Glu67, and Asp140.

Belongs to the RuvC family. In terms of assembly, homodimer which binds Holliday junction (HJ) DNA. The HJ becomes 2-fold symmetrical on binding to RuvC with unstacked arms; it has a different conformation from HJ DNA in complex with RuvA. In the full resolvosome a probable DNA-RuvA(4)-RuvB(12)-RuvC(2) complex forms which resolves the HJ. The cofactor is Mg(2+).

The protein resides in the cytoplasm. The catalysed reaction is Endonucleolytic cleavage at a junction such as a reciprocal single-stranded crossover between two homologous DNA duplexes (Holliday junction).. Functionally, the RuvA-RuvB-RuvC complex processes Holliday junction (HJ) DNA during genetic recombination and DNA repair. Endonuclease that resolves HJ intermediates. Cleaves cruciform DNA by making single-stranded nicks across the HJ at symmetrical positions within the homologous arms, yielding a 5'-phosphate and a 3'-hydroxyl group; requires a central core of homology in the junction. The consensus cleavage sequence is 5'-(A/T)TT(C/G)-3'. Cleavage occurs on the 3'-side of the TT dinucleotide at the point of strand exchange. HJ branch migration catalyzed by RuvA-RuvB allows RuvC to scan DNA until it finds its consensus sequence, where it cleaves and resolves the cruciform DNA. This Clostridioides difficile (strain 630) (Peptoclostridium difficile) protein is Crossover junction endodeoxyribonuclease RuvC.